The primary structure comprises 300 residues: MQRIQLAEDLQFSRVIHGLWRLNEWNYSDAELLSLIEWCIDHGITTFDHADIYGGYTCEKLFGNALALSPGLRENIELVTKCGIVLESPERPAHRSHHYNTSKSHILASVEQSLMNLRTDYIDMLLIHRPDPLMDPEGVAEAFQALKCSGKVRYFGVSNFKDHQYRMLESYLPEKLVTNQIELSAYELENMLDGTLNLCQEKRIPPMAWSPLAGGKVFTENTDKDRRVRTALESVQGEIGAASLDEVMYAWLYTHPAGIMPIVGSGKRERISAAINALSYKLDQDQWFRIFTAVQGYDIP.

The Proton donor role is filled by Tyr-53. 210–220 (SPLAGGKVFTE) contributes to the NADP(+) binding site.

Belongs to the aldo/keto reductase family. Aldo/keto reductase 2 subfamily.

This is an uncharacterized protein from Bacillus subtilis (strain 168).